Here is a 245-residue protein sequence, read N- to C-terminus: MRKGYIYVIENNFDNHVYIGSTVDSLENRFRRHKADALKRPSCLFHTYMKKHGVDNFVIKLLKEVEIISILDLHLLEQNFIKDYGTLNTLHGKLKNLEINDKPTNVVLSKQTPFFTTIEPNIVKTEDVLKEITTNPSISLKELIDIFIEEEQNFGTILNEMTCQHKIYISKKLLKWIGYEGDYKKQRDSFKKLLKRHNIDFEELKSNDIECENYPEIKVDMANLSNGVISQSKWLILNIYNFKYI.

The GIY-YIG domain occupies 2-97 (RKGYIYVIEN…NTLHGKLKNL (96 aa)).

This chain is Putative MSV199 domain-containing protein 146R, found in Acheta domesticus (House cricket).